The primary structure comprises 79 residues: Cell division protein ZapB (79 aa).

Positions 3–79 (LEVFEKLEAK…QALLGRMEEV (77 aa)) form a coiled coil.

Belongs to the ZapB family. As to quaternary structure, homodimer. The ends of the coiled-coil dimer bind to each other, forming polymers. Interacts with FtsZ.

The protein localises to the cytoplasm. Functionally, non-essential, abundant cell division factor that is required for proper Z-ring formation. It is recruited early to the divisome by direct interaction with FtsZ, stimulating Z-ring assembly and thereby promoting cell division earlier in the cell cycle. Its recruitment to the Z-ring requires functional FtsA or ZipA. The sequence is that of Cell division protein ZapB from Salmonella typhi.